Reading from the N-terminus, the 480-residue chain is Probable histone deacetylase 1-A (480 aa).

The tract at residues 10–321 (KVCYYYDGDV…WTYETAVALD (312 aa)) is histone deacetylase. H141 is an active-site residue. Residues 388–480 (SIHDDSGEED…KRVKEETKSV (93 aa)) form a disordered region. The segment covering 401–416 (PDKRISIRSSDKRIAC) has biased composition (basic and acidic residues). Residues 417–427 (DEEFSDSEDEG) show a composition bias toward acidic residues. Basic and acidic residues predominate over residues 443–480 (VKTEEEKEGEDKKDVKEEEKAKDEKTDSKRVKEETKSV).

The protein belongs to the histone deacetylase family. HD type 1 subfamily. As to quaternary structure, part of a large multiprotein complex that also contains RBBP4. In terms of tissue distribution, oocyte.

The protein localises to the nucleus. It localises to the cytoplasm. The enzyme catalyses N(6)-acetyl-L-lysyl-[histone] + H2O = L-lysyl-[histone] + acetate. The catalysed reaction is N(6)-acetyl-L-lysyl-[protein] + H2O = L-lysyl-[protein] + acetate. It carries out the reaction N(6)-(2E)-butenoyl-L-lysyl-[protein] + H2O = (2E)-2-butenoate + L-lysyl-[protein]. Histone deacetylase that catalyzes the deacetylation of lysine residues on the N-terminal part of the core histones (H2A, H2B, H3 and H4). Histone deacetylation gives a tag for epigenetic repression and plays an important role in transcriptional regulation, cell cycle progression and developmental events. Histone deacetylases act via the formation of large multiprotein complexes. Also functions as deacetylase for non-histone proteins. In addition to protein deacetylase activity, also has protein-lysine deacylase activity: acts as a protein decrotonylase by mediating decrotonylation ((2E)-butenoyl) of histones. In Xenopus laevis (African clawed frog), this protein is Probable histone deacetylase 1-A (hdac1-a).